The sequence spans 285 residues: Mitochondrial substrate carrier family protein S (285 aa).

Residues 1 to 9 lie on the Mitochondrial intermembrane side of the membrane; sequence MSTERGLKD. Solcar repeat units lie at residues 4-87, 96-183, and 197-283; these read ERGL…MKVL, LTVG…CKRY, and LNLP…VIKL. Residues 10-30 traverse the membrane as a helical segment; the sequence is SIAGTVAGAACLFTGHPFDTI. The Mitochondrial matrix portion of the chain corresponds to 31 to 61; sequence RVRLQTSNTPIGIMECFRNTIKYEGFSGLYK. The helical transmembrane segment at 62 to 82 threads the bilayer; it reads GVTSPLFGMMFETAVLFAGYG. Residues 83–101 lie on the Mitochondrial intermembrane side of the membrane; it reads QMKVLLQKDENTPLTVGQC. The helical transmembrane segment at 102-122 threads the bilayer; the sequence is AIAGGFAGVGASVVLTPVELV. At 123 to 150 the chain is on the mitochondrial matrix side; that stretch reads KCRLQVQTTGPQKYKGSLDCLVQILKEG. The helical transmembrane segment at 151–172 threads the bilayer; sequence GIRGAYRGFTPTIAREFVGNMA. Residues 173-199 are Mitochondrial intermembrane-facing; sequence FFSTYETCKRYFKNKENKPNDDDELNL. A helical transmembrane segment spans residues 200–220; sequence PALIISGGLGGMAYWTVLYPV. The Mitochondrial matrix portion of the chain corresponds to 221-258; the sequence is DVAKSKIQISEGAGPSPSIVKVLKEIYSKEGVKGLFRG. Residues 259 to 277 traverse the membrane as a helical segment; that stretch reads YTPTIIRSFPANAAMFSVY. The Mitochondrial intermembrane portion of the chain corresponds to 278-285; that stretch reads ELVIKLLG.

The protein belongs to the mitochondrial carrier (TC 2.A.29) family.

The protein localises to the mitochondrion inner membrane. In terms of biological role, mitochondrial solute carriers shuttle metabolites, nucleotides, and cofactors through the mitochondrial inner membrane. Mediates the transport of acylcarnitines of different length across the mitochondrial inner membrane from the cytosol to the mitochondrial matrix for their oxidation by the mitochondrial fatty acid-oxidation pathway. The chain is Mitochondrial substrate carrier family protein S (mcfS) from Dictyostelium discoideum (Social amoeba).